The primary structure comprises 592 residues: Arginine--tRNA ligase (592 aa).

A 'HIGH' region motif is present at residues 128–138; that stretch reads ANPTGPLHVGH.

This sequence belongs to the class-I aminoacyl-tRNA synthetase family. In terms of assembly, monomer.

It localises to the cytoplasm. It catalyses the reaction tRNA(Arg) + L-arginine + ATP = L-arginyl-tRNA(Arg) + AMP + diphosphate. The polypeptide is Arginine--tRNA ligase (Hydrogenovibrio crunogenus (strain DSM 25203 / XCL-2) (Thiomicrospira crunogena)).